The primary structure comprises 130 residues: Gloverin (130 aa).

Hemolymph.

The protein resides in the secreted. Its function is as follows. Antibacterial protein active against Gram-negative bacteria. The sequence is that of Gloverin from Hyalophora cecropia (Cecropia moth).